The primary structure comprises 429 residues: Adenylosuccinate synthetase (429 aa).

GTP contacts are provided by residues 12–18 and 40–42; these read GDEGKGK and GHT. The active-site Proton acceptor is D13. D13 and G40 together coordinate Mg(2+). IMP is bound by residues 13-16, 38-41, T128, R142, Q223, T238, and R302; these read DEGK and NAGH. H41 functions as the Proton donor in the catalytic mechanism. 298–304 lines the substrate pocket; the sequence is TTTGRPR. Residues R304, 330–332, and 412–414 contribute to the GTP site; these read SID and SVG.

This sequence belongs to the adenylosuccinate synthetase family. In terms of assembly, homodimer. The cofactor is Mg(2+).

It localises to the cytoplasm. It catalyses the reaction IMP + L-aspartate + GTP = N(6)-(1,2-dicarboxyethyl)-AMP + GDP + phosphate + 2 H(+). Its pathway is purine metabolism; AMP biosynthesis via de novo pathway; AMP from IMP: step 1/2. Plays an important role in the de novo pathway of purine nucleotide biosynthesis. Catalyzes the first committed step in the biosynthesis of AMP from IMP. This is Adenylosuccinate synthetase from Bacillus thuringiensis (strain Al Hakam).